Here is a 97-residue protein sequence, read N- to C-terminus: Large ribosomal subunit protein uL23 (97 aa).

The protein belongs to the universal ribosomal protein uL23 family. In terms of assembly, part of the 50S ribosomal subunit. Contacts protein L29, and trigger factor when it is bound to the ribosome.

One of the early assembly proteins it binds 23S rRNA. One of the proteins that surrounds the polypeptide exit tunnel on the outside of the ribosome. Forms the main docking site for trigger factor binding to the ribosome. This is Large ribosomal subunit protein uL23 from Limosilactobacillus fermentum (strain NBRC 3956 / LMG 18251) (Lactobacillus fermentum).